We begin with the raw amino-acid sequence, 269 residues long: GTP cyclohydrolase FolE2 (269 aa).

The protein belongs to the GTP cyclohydrolase IV family.

It carries out the reaction GTP + H2O = 7,8-dihydroneopterin 3'-triphosphate + formate + H(+). Its pathway is cofactor biosynthesis; 7,8-dihydroneopterin triphosphate biosynthesis; 7,8-dihydroneopterin triphosphate from GTP: step 1/1. Its function is as follows. Converts GTP to 7,8-dihydroneopterin triphosphate. The sequence is that of GTP cyclohydrolase FolE2 from Burkholderia vietnamiensis (strain G4 / LMG 22486) (Burkholderia cepacia (strain R1808)).